A 360-amino-acid chain; its full sequence is Phospho-N-acetylmuramoyl-pentapeptide-transferase (360 aa).

The next 10 helical transmembrane spans lie at 21 to 41 (YVTF…LWWG), 74 to 94 (MGGI…GDLG), 97 to 117 (YVWV…IDDY), 135 to 155 (ILQS…ADTV), 168 to 188 (IMPQ…VGSS), 199 to 219 (GLAI…AYLS), 236 to 256 (AGEL…FLWF), 263 to 283 (VFMG…IAVL), 288 to 308 (ILLV…ILQV), and 338 to 358 (VIVR…ATLK).

This sequence belongs to the glycosyltransferase 4 family. MraY subfamily. Mg(2+) serves as cofactor.

It is found in the cell inner membrane. It catalyses the reaction UDP-N-acetyl-alpha-D-muramoyl-L-alanyl-gamma-D-glutamyl-meso-2,6-diaminopimeloyl-D-alanyl-D-alanine + di-trans,octa-cis-undecaprenyl phosphate = di-trans,octa-cis-undecaprenyl diphospho-N-acetyl-alpha-D-muramoyl-L-alanyl-D-glutamyl-meso-2,6-diaminopimeloyl-D-alanyl-D-alanine + UMP. It participates in cell wall biogenesis; peptidoglycan biosynthesis. Functionally, catalyzes the initial step of the lipid cycle reactions in the biosynthesis of the cell wall peptidoglycan: transfers peptidoglycan precursor phospho-MurNAc-pentapeptide from UDP-MurNAc-pentapeptide onto the lipid carrier undecaprenyl phosphate, yielding undecaprenyl-pyrophosphoryl-MurNAc-pentapeptide, known as lipid I. This Shewanella violacea (strain JCM 10179 / CIP 106290 / LMG 19151 / DSS12) protein is Phospho-N-acetylmuramoyl-pentapeptide-transferase.